Here is a 264-residue protein sequence, read N- to C-terminus: Hydroxyethylthiazole kinase (264 aa).

Methionine 47 is a substrate binding site. Residues arginine 123 and serine 169 each contribute to the ATP site. Position 196 (glycine 196) interacts with substrate.

Belongs to the Thz kinase family. The cofactor is Mg(2+).

It carries out the reaction 5-(2-hydroxyethyl)-4-methylthiazole + ATP = 4-methyl-5-(2-phosphooxyethyl)-thiazole + ADP + H(+). The protein operates within cofactor biosynthesis; thiamine diphosphate biosynthesis; 4-methyl-5-(2-phosphoethyl)-thiazole from 5-(2-hydroxyethyl)-4-methylthiazole: step 1/1. Its function is as follows. Catalyzes the phosphorylation of the hydroxyl group of 4-methyl-5-beta-hydroxyethylthiazole (THZ). This is Hydroxyethylthiazole kinase from Brachyspira hyodysenteriae (strain ATCC 49526 / WA1).